The following is a 511-amino-acid chain: Ribonuclease Y (511 aa).

Residues 2-22 (ITTVIIAIVCFAVGGGLSYML) traverse the membrane as a helical segment. Residues 201 to 261 (SVTVFHIESD…VRREIARLAL (61 aa)) enclose the KH domain. The 94-residue stretch at 327–420 (LLQHARETAN…VQVCDAISGA (94 aa)) folds into the HD domain.

This sequence belongs to the RNase Y family.

It is found in the cell membrane. Functionally, endoribonuclease that initiates mRNA decay. This Phocaeicola vulgatus (strain ATCC 8482 / DSM 1447 / JCM 5826 / CCUG 4940 / NBRC 14291 / NCTC 11154) (Bacteroides vulgatus) protein is Ribonuclease Y.